We begin with the raw amino-acid sequence, 199 residues long: Chaperone protein TorD (199 aa).

This sequence belongs to the TorD/DmsD family. TorD subfamily.

The protein localises to the cytoplasm. Its function is as follows. Involved in the biogenesis of TorA. Acts on TorA before the insertion of the molybdenum cofactor and, as a result, probably favors a conformation of the apoenzyme that is competent for acquiring the cofactor. This is Chaperone protein TorD from Escherichia coli O8 (strain IAI1).